We begin with the raw amino-acid sequence, 430 residues long: Glutamate-1-semialdehyde 2,1-aminomutase (430 aa).

N6-(pyridoxal phosphate)lysine is present on lysine 267.

It belongs to the class-III pyridoxal-phosphate-dependent aminotransferase family. HemL subfamily. Homodimer. The cofactor is pyridoxal 5'-phosphate.

It localises to the cytoplasm. The catalysed reaction is (S)-4-amino-5-oxopentanoate = 5-aminolevulinate. It participates in porphyrin-containing compound metabolism; protoporphyrin-IX biosynthesis; 5-aminolevulinate from L-glutamyl-tRNA(Glu): step 2/2. This chain is Glutamate-1-semialdehyde 2,1-aminomutase, found in Anaeromyxobacter sp. (strain K).